The primary structure comprises 216 residues: Probable calcium-binding protein CML35 (216 aa).

Residues 18–58 are disordered; sequence TKSKASVSRSEPSSFSSNASSSSSDGSYGNLKQGPTATPIS. The span at 23-44 shows a compositional bias: low complexity; it reads SVSRSEPSSFSSNASSSSSDGS. 4 consecutive EF-hand domains span residues 66-101, 103-138, 141-176, and 178-213; these read DFYT…LSHE, PSQE…TSGE, VETE…IGDE, and CTLE…AMND. Ca(2+)-binding residues include aspartate 79, aspartate 81, aspartate 83, and aspartate 90. Ca(2+) is bound by residues aspartate 154, aspartate 156, asparagine 158, lysine 160, glutamate 165, aspartate 191, asparagine 193, aspartate 195, and aspartate 202.

In terms of biological role, potential calcium sensor. In Arabidopsis thaliana (Mouse-ear cress), this protein is Probable calcium-binding protein CML35 (CML35).